The chain runs to 703 residues: Prolyl 3-hydroxylase 2 (703 aa).

The signal sequence occupies residues 1 to 21 (MRESTWVSLLLLLLLPAPQRG). Residues 18 to 40 (PQRGGPQDGRGSPEPEPERGPLQ) are disordered. TPR repeat units lie at residues 42–75 (FDLLYASGVAAYYSGDYEGAVRDLEAALRSHRRL), 144–177 (RVPYNYLQRAYIKLNQLDKAMEAAHTFFMANPEH), 205–238 (HLESYNAGVKHYEADDFEAAIKYFEQALREYFNE), and 301–334 (PLHYDYLQFAYYRVGEYVKALECAKAYLMFHPDD). Residues Asn444, Asn455, and Asn544 are each glycosylated (N-linked (GlcNAc...) asparagine). The Fe2OG dioxygenase domain occupies 552-666 (THMVCRTALS…RCAVALWFTL (115 aa)). Residues His575, Asp577, and His647 each contribute to the Fe cation site. Residue Arg657 is part of the active site. A Prevents secretion from ER motif is present at residues 700–703 (KDEL).

Belongs to the leprecan family. Requires Fe cation as cofactor. L-ascorbate is required as a cofactor. Detected at low levels in cartilage.

It localises to the endoplasmic reticulum. The protein resides in the sarcoplasmic reticulum. Its subcellular location is the golgi apparatus. The catalysed reaction is L-prolyl-[collagen] + 2-oxoglutarate + O2 = trans-3-hydroxy-L-prolyl-[collagen] + succinate + CO2. Its function is as follows. Prolyl 3-hydroxylase that catalyzes the post-translational formation of 3-hydroxyproline on collagens. Contributes to proline 3-hydroxylation of collagen COL4A1 and COL1A1 in tendons, the eye sclera and in the eye lens capsule. Has high activity with the type IV collagen COL4A1, and lower activity with COL1A1. Catalyzes hydroxylation of the first Pro in Gly-Pro-Hyp sequences where Hyp is 4-hydroxyproline. Has no activity on substrates that lack 4-hydroxyproline in the third position. This chain is Prolyl 3-hydroxylase 2, found in Rattus norvegicus (Rat).